The following is a 332-amino-acid chain: Ribosomal RNA small subunit methyltransferase C (332 aa).

The protein belongs to the methyltransferase superfamily. RsmC family. As to quaternary structure, monomer.

Its subcellular location is the cytoplasm. It catalyses the reaction guanosine(1207) in 16S rRNA + S-adenosyl-L-methionine = N(2)-methylguanosine(1207) in 16S rRNA + S-adenosyl-L-homocysteine + H(+). Its function is as follows. Specifically methylates the guanine in position 1207 of 16S rRNA in the 30S particle. The sequence is that of Ribosomal RNA small subunit methyltransferase C from Pseudomonas putida (strain ATCC 700007 / DSM 6899 / JCM 31910 / BCRC 17059 / LMG 24140 / F1).